The chain runs to 262 residues: Phenylalanine-4-hydroxylase (262 aa).

Fe cation is bound by residues H121, H126, and E166.

This sequence belongs to the biopterin-dependent aromatic amino acid hydroxylase family. As to quaternary structure, monomer. The cofactor is Fe(2+).

It catalyses the reaction (6R)-L-erythro-5,6,7,8-tetrahydrobiopterin + L-phenylalanine + O2 = (4aS,6R)-4a-hydroxy-L-erythro-5,6,7,8-tetrahydrobiopterin + L-tyrosine. It functions in the pathway amino-acid degradation; L-phenylalanine degradation; acetoacetate and fumarate from L-phenylalanine: step 1/6. In Pseudomonas aeruginosa (strain ATCC 15692 / DSM 22644 / CIP 104116 / JCM 14847 / LMG 12228 / 1C / PRS 101 / PAO1), this protein is Phenylalanine-4-hydroxylase (phhA).